Consider the following 379-residue polypeptide: Pre-mRNA-processing protein 45 (379 aa).

Pro residues predominate over residues 1-10 (MFSNRLPPPK). 2 disordered regions span residues 1 to 22 (MFSNRLPPPKHSQGRVSTALSS) and 353 to 379 (SEGASGSHGPIQFTKAESDDKSDNYGA). Over residues 368-379 (AESDDKSDNYGA) the composition is skewed to basic and acidic residues.

This sequence belongs to the SNW family. Belongs to the CWC complex (or CEF1-associated complex), a spliceosome sub-complex reminiscent of a late-stage spliceosome composed of the U2, U5 and U6 snRNAs and at least BUD13, BUD31, BRR2, CDC40, CEF1, CLF1, CUS1, CWC2, CWC15, CWC21, CWC22, CWC23, CWC24, CWC25, CWC27, ECM2, HSH155, IST3, ISY1, LEA1, MSL1, NTC20, PRP8, PRP9, PRP11, PRP19, PRP21, PRP22, PRP45, PRP46, SLU7, SMB1, SMD1, SMD2, SMD3, SMX2, SMX3, SNT309, SNU114, SPP2, SYF1, SYF2, RSE1 and YJU2. Interacts with CLF1, PRP22 and PRP46. Interacts with SPP382.

It localises to the nucleus. Its function is as follows. Involved in pre-mRNA splicing. Associated with the spliceosome throughout the splicing reactions, until after the second catalytic step. The protein is Pre-mRNA-processing protein 45 (PRP45) of Saccharomyces cerevisiae (strain ATCC 204508 / S288c) (Baker's yeast).